Reading from the N-terminus, the 200-residue chain is Rho-related protein racH (200 aa).

11–18 (GDMSVGKT) contributes to the GTP binding site. The short motif at 33 to 41 (YVPTVFDNY) is the Effector region element. GTP contacts are provided by residues 58–62 (DTAGS) and 117–120 (TKLD). Residues 178–200 (EELAKSKKDSKKGDKDSKDCIIQ) are disordered. At cysteine 197 the chain carries Cysteine methyl ester. Residue cysteine 197 is the site of S-geranylgeranyl cysteine attachment. Positions 198–200 (IIQ) are cleaved as a propeptide — removed in mature form.

This sequence belongs to the small GTPase superfamily. Rho family.

It is found in the cell membrane. The polypeptide is Rho-related protein racH (racH) (Dictyostelium discoideum (Social amoeba)).